Reading from the N-terminus, the 243-residue chain is 1-(5-phosphoribosyl)-5-[(5-phosphoribosylamino)methylideneamino] imidazole-4-carboxamide isomerase (243 aa).

Catalysis depends on Asp-8, which acts as the Proton acceptor. The active-site Proton donor is Asp-129.

This sequence belongs to the HisA/HisF family.

The protein localises to the cytoplasm. It carries out the reaction 1-(5-phospho-beta-D-ribosyl)-5-[(5-phospho-beta-D-ribosylamino)methylideneamino]imidazole-4-carboxamide = 5-[(5-phospho-1-deoxy-D-ribulos-1-ylimino)methylamino]-1-(5-phospho-beta-D-ribosyl)imidazole-4-carboxamide. It participates in amino-acid biosynthesis; L-histidine biosynthesis; L-histidine from 5-phospho-alpha-D-ribose 1-diphosphate: step 4/9. The polypeptide is 1-(5-phosphoribosyl)-5-[(5-phosphoribosylamino)methylideneamino] imidazole-4-carboxamide isomerase (Carboxydothermus hydrogenoformans (strain ATCC BAA-161 / DSM 6008 / Z-2901)).